The primary structure comprises 251 residues: MAPKNSSWNPFDDEKEAAKSFSLNPFDDDDDDKEVEKRFTSSLKPSGGKENQTVQELESYAVYNSEETTKTVQGCLKVAEEIRCDASKTLVMLNEQGDQITRTHQKTVDLDHHLSRGEKILGRLGGVFSRTWKPKKSRSITGPVITKGDSPKRKVIDLKTREKLGLNPSLKPKSKTLPEAVDAYQKTQIAKQDEALTDLSALLGELKNMAVDMGTAIERQTNELDHLQDNADELNYRVKQSNQRARYLLRK.

The tract at residues 1–52 (MAPKNSSWNPFDDEKEAAKSFSLNPFDDDDDDKEVEKRFTSSLKPSGGKENQ) is disordered. Over residues 40–52 (TSSLKPSGGKENQ) the composition is skewed to polar residues. Positions 186–248 (KTQIAKQDEA…KQSNQRARYL (63 aa)) constitute a t-SNARE coiled-coil homology domain.

This sequence belongs to the SNAP-25 family.

The protein resides in the membrane. It is found in the cytoplasm. Its function is as follows. SNAREs, soluble N-ethylmaleimide-sensitive factor-attachment protein receptors, are essential proteins for fusion of cellular membranes. SNAREs localized on opposing membranes assemble to form a trans-SNARE complex, an extended, parallel four alpha-helical bundle that drives membrane fusion. The protein is SNAP25 homologous protein SNAP29 (SNAP29) of Arabidopsis thaliana (Mouse-ear cress).